We begin with the raw amino-acid sequence, 657 residues long: Endoplasmic reticulum mannosyl-oligosaccharide 1,2-alpha-mannosidase (657 aa).

Over 1–49 (MYPPPPAPAPHRDFISVTLSLGESYDNSKSRRRRSCWRKWKQLSRLQRN) the chain is Cytoplasmic. The helical transmembrane segment at 50–70 (VILFVLGFLILCGFLYSLQVS) threads the bilayer. Residues 71–657 (DQWKALSGSR…AHPLPIWSPA (587 aa)) lie on the Lumenal side of the membrane. Phosphoserine is present on Ser101. Residues 118-157 (HLRRGPPHLQIRPPNTVSKDGMQDDAKEREAALGKAQQEE) form a disordered region. Residues 138–157 (GMQDDAKEREAALGKAQQEE) show a composition bias toward basic and acidic residues. Catalysis depends on Glu288, which acts as the Proton donor. Residue Asp421 is part of the active site. Residues Cys485 and Cys514 are joined by a disulfide bond. The active-site Proton donor is the Glu528. The active site involves Glu557. Thr646 lines the Ca(2+) pocket.

This sequence belongs to the glycosyl hydrolase 47 family. Ca(2+) is required as a cofactor.

Its subcellular location is the endoplasmic reticulum membrane. The catalysed reaction is N(4)-(alpha-D-Man-(1-&gt;2)-alpha-D-Man-(1-&gt;2)-alpha-D-Man-(1-&gt;3)-[alpha-D-Man-(1-&gt;2)-alpha-D-Man-(1-&gt;3)-[alpha-D-Man-(1-&gt;2)-alpha-D-Man-(1-&gt;6)]-alpha-D-Man-(1-&gt;6)]-beta-D-Man-(1-&gt;4)-beta-D-GlcNAc-(1-&gt;4)-beta-D-GlcNAc)-L-asparaginyl-[protein] (N-glucan mannose isomer 9A1,2,3B1,2,3) + 4 H2O = N(4)-(alpha-D-Man-(1-&gt;3)-[alpha-D-Man-(1-&gt;3)-[alpha-D-Man-(1-&gt;6)]-alpha-D-Man-(1-&gt;6)]-beta-D-Man-(1-&gt;4)-beta-D-GlcNAc-(1-&gt;4)-beta-D-GlcNAc)-L-asparaginyl-[protein] (N-glucan mannose isomer 5A1,2) + 4 beta-D-mannose. The enzyme catalyses N(4)-(alpha-D-Man-(1-&gt;2)-alpha-D-Man-(1-&gt;2)-alpha-D-Man-(1-&gt;3)-[alpha-D-Man-(1-&gt;3)-[alpha-D-Man-(1-&gt;2)-alpha-D-Man-(1-&gt;6)]-alpha-D-Man-(1-&gt;6)]-beta-D-Man-(1-&gt;4)-beta-D-GlcNAc-(1-&gt;4)-beta-D-GlcNAc)-L-asparaginyl-[protein] (N-glucan mannose isomer 8A1,2,3B1,3) + 3 H2O = N(4)-(alpha-D-Man-(1-&gt;3)-[alpha-D-Man-(1-&gt;3)-[alpha-D-Man-(1-&gt;6)]-alpha-D-Man-(1-&gt;6)]-beta-D-Man-(1-&gt;4)-beta-D-GlcNAc-(1-&gt;4)-beta-D-GlcNAc)-L-asparaginyl-[protein] (N-glucan mannose isomer 5A1,2) + 3 beta-D-mannose. The protein operates within protein modification; protein glycosylation. Functionally, involved in glycoprotein quality control targeting of misfolded glycoproteins for degradation. It primarily trims a single alpha-1,2-linked mannose residue from Man(9)GlcNAc(2) to produce Man(8)GlcNAc(2), but at high enzyme concentrations, as found in the ER quality control compartment (ERQC), it further trims the carbohydrates to Man(5-6)GlcNAc(2). The polypeptide is Endoplasmic reticulum mannosyl-oligosaccharide 1,2-alpha-mannosidase (Man1b1) (Rattus norvegicus (Rat)).